We begin with the raw amino-acid sequence, 220 residues long: Octanoyltransferase (220 aa).

The region spanning 31–217 (ENTPDEIWLV…HFAEILGYNA (187 aa)) is the BPL/LPL catalytic domain. Residues 70-77 (RGGQITYH), 146-148 (SLG), and 159-161 (GLA) contribute to the substrate site. The Acyl-thioester intermediate role is filled by Cys177.

The protein belongs to the LipB family.

It is found in the cytoplasm. It carries out the reaction octanoyl-[ACP] + L-lysyl-[protein] = N(6)-octanoyl-L-lysyl-[protein] + holo-[ACP] + H(+). It functions in the pathway protein modification; protein lipoylation via endogenous pathway; protein N(6)-(lipoyl)lysine from octanoyl-[acyl-carrier-protein]: step 1/2. Functionally, catalyzes the transfer of endogenously produced octanoic acid from octanoyl-acyl-carrier-protein onto the lipoyl domains of lipoate-dependent enzymes. Lipoyl-ACP can also act as a substrate although octanoyl-ACP is likely to be the physiological substrate. The sequence is that of Octanoyltransferase from Actinobacillus succinogenes (strain ATCC 55618 / DSM 22257 / CCUG 43843 / 130Z).